We begin with the raw amino-acid sequence, 1621 residues long: ALK tyrosine kinase receptor (1621 aa).

A signal peptide spans 1–18 (MGAAGFLWLLPPLLLAAA). Residues 19–1042 (SYSGAATDQR…PHLPLSLILS (1024 aa)) lie on the Extracellular side of the membrane. The segment at 48-70 (RLQRKSLAVDFVVPSLFRVYARD) is heparin-binding region. 11 N-linked (GlcNAc...) asparagine glycosylation sites follow: N174, N248, N289, N328, N415, N428, N449, N567, N575, N631, and N673. The 164-residue stretch at 268-431 (LECSFDFPCE…DFFALKNCSE (164 aa)) folds into the MAM 1 domain. In terms of domain architecture, LDL-receptor class A spans 441–477 (LQSSFTCWNGTVLQLGQACDFHQDCAQGEDEGQLCSK). One can recognise an MAM 2 domain in the interval 482–640 (FYCNFENGFC…NISISLDCYL (159 aa)). C692 and C705 are oxidised to a cystine. N713 carries an N-linked (GlcNAc...) asparagine glycan. An intrachain disulfide couples C787 to C798. N-linked (GlcNAc...) asparagine glycans are attached at residues N812, N868, and N890. C910 and C932 are joined by a disulfide. N-linked (GlcNAc...) asparagine glycosylation is present at N990. 3 disulfides stabilise this stretch: C991–C999, C994–C1010, and C1012–C1025. Residues 991–1029 (CSHCEVDECHMDPESHKVICFCDHGTVLADDGVSCIVSP) are EGF-like. Residues 1043–1063 (VVTSALVAALVLAFSGIMIVY) traverse the membrane as a helical segment. The Cytoplasmic segment spans residues 1064–1621 (RRKHQELQAM…SKNKVTQPGP (558 aa)). Residues Y1082, Y1096, and Y1100 each carry the phosphotyrosine modification. The 277-residue stretch at 1120–1396 (ITLIRGLGHG…IEYCTQDPDV (277 aa)) folds into the Protein kinase domain. Residues 1126–1134 (LGHGAFGEV) and H1128 contribute to the ATP site. Residue Y1135 is modified to Phosphotyrosine. ATP is bound by residues K1154 and 1201–1203 (ELM). Residue D1253 is the Proton acceptor of the active site. An ATP-binding site is contributed by D1274. The residue at position 1282 (Y1282) is a Phosphotyrosine. The segment at 1412 to 1556 (EEKVPMRPKD…WTGPGAGPRR (145 aa)) is disordered. Over residues 1414–1423 (KVPMRPKDPE) the composition is skewed to basic and acidic residues. Positions 1441–1461 (SAAPQPAALTAPGPSVKKPPG) are enriched in low complexity. Gly residues predominate over residues 1462–1472 (AGAGAGAGAGA). The span at 1506–1518 (NKPTSLWNPTYGS) shows a compositional bias: polar residues. Y1516 is subject to Phosphotyrosine. The segment covering 1543 to 1552 (AEGGWTGPGA) has biased composition (gly residues).

It belongs to the protein kinase superfamily. Tyr protein kinase family. Insulin receptor subfamily. As to quaternary structure, homodimer; homodimerizes following heparin- and ligand-binding. Interacts with CBL, IRS1, PIK3R1 and PLCG1. Interacts with FRS2 and SHC1. Interacts with PTN and MDK. Post-translationally, phosphorylated at tyrosine residues by autocatalysis, which activates kinase activity. In cells not stimulated by a ligand, receptor protein tyrosine phosphatase beta and zeta complex (PTPRB/PTPRZ1) dephosphorylates ALK at the sites in ALK that are undergoing autophosphorylation through autoactivation. In terms of tissue distribution, mainly expressed in central nervous system (CNS) and other parts of the brain such as the paraventricular nucleus (PVN) of the hypothalamus. Expression is also found in peripheral nervous systems, eye, nasal epithelium, olfactory nerve, tongue, skin, tissue surrounding the esophagus, stomach, midgut, as well as testis and ovary.

It localises to the cell membrane. The catalysed reaction is L-tyrosyl-[protein] + ATP = O-phospho-L-tyrosyl-[protein] + ADP + H(+). Activated upon ALKAL2 ligand-binding. ALKAL2-driven activation is coupled with heparin-binding. Following ligand-binding, homodimerizes and autophosphorylates, activating its kinase activity. Inactivated through dephosphorylation by receptor protein tyrosine phosphatase beta and zeta complex (PTPRB/PTPRZ1) when there is no stimulation by a ligand. Neuronal receptor tyrosine kinase that is essentially and transiently expressed in specific regions of the central and peripheral nervous systems and plays an important role in the genesis and differentiation of the nervous system. Also acts as a key thinness protein involved in the resistance to weight gain: in hypothalamic neurons, controls energy expenditure acting as a negative regulator of white adipose tissue lipolysis and sympathetic tone to fine-tune energy homeostasis. Following activation by ALKAL2 ligand at the cell surface, transduces an extracellular signal into an intracellular response. In contrast, ALKAL1 is not a potent physiological ligand for ALK. Ligand-binding to the extracellular domain induces tyrosine kinase activation, leading to activation of the mitogen-activated protein kinase (MAPK) pathway. Phosphorylates almost exclusively at the first tyrosine of the Y-x-x-x-Y-Y motif. Induces tyrosine phosphorylation of CBL, FRS2, IRS1 and SHC1, as well as of the MAP kinases MAPK1/ERK2 and MAPK3/ERK1. ALK activation may also be regulated by pleiotrophin (PTN) and midkine (MDK). PTN-binding induces MAPK pathway activation, which is important for the anti-apoptotic signaling of PTN and regulation of cell proliferation. MDK-binding induces phosphorylation of the ALK target insulin receptor substrate (IRS1), activates mitogen-activated protein kinases (MAPKs) and PI3-kinase, resulting also in cell proliferation induction. Drives NF-kappa-B activation, probably through IRS1 and the activation of the AKT serine/threonine kinase. Recruitment of IRS1 to activated ALK and the activation of NF-kappa-B are essential for the autocrine growth and survival signaling of MDK. This Mus musculus (Mouse) protein is ALK tyrosine kinase receptor.